We begin with the raw amino-acid sequence, 304 residues long: Sulfate adenylyltransferase subunit 2 (304 aa).

Belongs to the PAPS reductase family. CysD subfamily. In terms of assembly, heterodimer composed of CysD, the smaller subunit, and CysNC.

The catalysed reaction is sulfate + ATP + H(+) = adenosine 5'-phosphosulfate + diphosphate. The protein operates within sulfur metabolism; hydrogen sulfide biosynthesis; sulfite from sulfate: step 1/3. With CysN forms the ATP sulfurylase (ATPS) that catalyzes the adenylation of sulfate producing adenosine 5'-phosphosulfate (APS) and diphosphate, the first enzymatic step in sulfur assimilation pathway. APS synthesis involves the formation of a high-energy phosphoric-sulfuric acid anhydride bond driven by GTP hydrolysis by CysN coupled to ATP hydrolysis by CysD. The chain is Sulfate adenylyltransferase subunit 2 from Xylella fastidiosa (strain 9a5c).